We begin with the raw amino-acid sequence, 629 residues long: tRNA uridine 5-carboxymethylaminomethyl modification enzyme MnmG (629 aa).

FAD is bound by residues 13 to 18, V125, and S180; that span reads GGGHAG. Residue 273 to 287 coordinates NAD(+); the sequence is GPRYCPSIEDKVMRF. Q370 is an FAD binding site.

The protein belongs to the MnmG family. Homodimer. Heterotetramer of two MnmE and two MnmG subunits. The cofactor is FAD.

The protein localises to the cytoplasm. Its function is as follows. NAD-binding protein involved in the addition of a carboxymethylaminomethyl (cmnm) group at the wobble position (U34) of certain tRNAs, forming tRNA-cmnm(5)s(2)U34. The protein is tRNA uridine 5-carboxymethylaminomethyl modification enzyme MnmG of Sodalis glossinidius (strain morsitans).